A 64-amino-acid chain; its full sequence is Large ribosomal subunit protein bL32 (64 aa).

A disordered region spans residues 1 to 20; sequence MALPKYKTSRANTHSRRANW.

The protein belongs to the bacterial ribosomal protein bL32 family.

The chain is Large ribosomal subunit protein bL32 from Bifidobacterium adolescentis (strain ATCC 15703 / DSM 20083 / NCTC 11814 / E194a).